We begin with the raw amino-acid sequence, 344 residues long: Fibronectin type 3 and ankyrin repeat domains 1 protein (344 aa).

The region spanning 11 to 108 (KPHPPVVGKV…VVSVATTREP (98 aa)) is the Fibronectin type-III domain. ANK repeat units lie at residues 109 to 139 (ISSE…MIDV), 143 to 172 (FGFT…DVNL), 176 to 205 (SGKD…SWEA), 209 to 238 (GGCT…EVDV), 243 to 273 (SGWT…DVNI), and 277 to 306 (DGKT…DATV).

Interacts with COPS5; regulates the phosphorylation of JUN and the transcriptional activity of AP-1. Interacts with RYBP; may prevent the ubiquitin-mediated proteasomal degradation of FANK1. Post-translationally, polyubiquitinated. Polyubiquitination leads to proteasomal degradation. Mostly restricted to testis (at protein level), including mid to late pachytene spermatocytes (stages VI-X), diplotene spermatocytes (stage XI), meiotically dividing spermatocytes (stage XII) and spermatids in steps 1-14. Highest levels in late pachytene spermatocytes and spermatids in steps 1-9.

Its subcellular location is the nucleus. The protein localises to the cytoplasm. It is found in the cytosol. The protein resides in the cytoskeleton. It localises to the cilium basal body. Its subcellular location is the cell projection. The protein localises to the cilium. In terms of biological role, through the activation of JUN and AP-1-mediated transcription, may regulate apoptosis. The protein is Fibronectin type 3 and ankyrin repeat domains 1 protein of Mus musculus (Mouse).